We begin with the raw amino-acid sequence, 605 residues long: Ras guanine nucleotide exchange factor A (605 aa).

One can recognise a LisH domain in the interval Asp-67–Thr-99. One can recognise an N-terminal Ras-GEF domain in the interval Asp-198–Ser-320. The Ras-GEF domain maps to Asp-353–Lys-597.

Component of the Sca1 complex composed of at least gefA, gefH, scaA, phr, and the protein phosphatase 2A subunits pppA and pho2B. Interacts directly with gefH.

It localises to the cell membrane. Functionally, ras-bound GDP/GTP exchange factor required for normal activation of adenylyl cyclase. Component of the Sca1 complex, a regulator of cell motility, chemotaxis and signal relay. The Sca1 complex is recruited to the plasma membrane in a chemoattractant- and F-actin-dependent manner and is enriched at the leading edge of chemotaxing cells where it regulates F-actin dynamics and signal relay by controlling the activation of rasC and the downstream target of rapamycin complex 2 (TORC2)-Akt/protein kinase B (PKB) pathway. This is Ras guanine nucleotide exchange factor A (gefA) from Dictyostelium discoideum (Social amoeba).